We begin with the raw amino-acid sequence, 571 residues long: Cationic amino acid transporter 8 (571 aa).

An N-linked (GlcNAc...) asparagine glycan is attached at Asn35. A run of 6 helical transmembrane segments spans residues 39–59 (FWLLVIIVIYTATSACIYFDW), 94–114 (SLYPITLAIHFTMSVFCGFLY), 117–137 (IGPKFTAIIGQMCNIMSWVFL), 148–168 (FLSFVFLGLGADTAFIPILTI), 177–197 (TFILTVVGAAASLSYAVPATL), and 217–237 (IFLILVPCLLVATFLLPLMPF). N-linked (GlcNAc...) asparagine glycosylation is found at Asn298, Asn325, and Asn346. A helical transmembrane segment spans residues 365 to 385 (LFFKVLLSYPSICIIVYFILF). Asn386 carries an N-linked (GlcNAc...) asparagine glycan. 5 consecutive transmembrane segments (helical) span residues 405 to 425 (SIINIINILMPISCIPCIIFG), 433 to 453 (SAIIIILMNAFSALMHLTALI), 461 to 481 (VSAFLYMCVTSIYTSQIYCFI), 488 to 508 (VVFGKLLGFASLCGGLFSLLC), and 528 to 548 (VVLLLVIAFILMFLPLTVLYF).

This sequence belongs to the SLC43A transporter (TC 2.A.1.44) family.

It localises to the membrane. It catalyses the reaction L-arginine(in) = L-arginine(out). In terms of biological role, sodium-independent cationic amino acid transporter. Transports L-arginine, L-lysine, L-histidine and L-ornithine. The protein is Cationic amino acid transporter 8 of Plasmodium vivax (strain Salvador I).